A 199-amino-acid chain; its full sequence is Protein-methionine-sulfoxide reductase heme-binding subunit MsrQ (199 aa).

4 consecutive transmembrane segments (helical) span residues tryptophan 10–isoleucine 30, leucine 82–isoleucine 102, proline 116–threonine 136, and valine 153–serine 173.

Belongs to the MsrQ family. In terms of assembly, heterodimer of a catalytic subunit (MsrP) and a heme-binding subunit (MsrQ). It depends on FMN as a cofactor. Requires heme b as cofactor.

Its subcellular location is the cell inner membrane. In terms of biological role, part of the MsrPQ system that repairs oxidized periplasmic proteins containing methionine sulfoxide residues (Met-O), using respiratory chain electrons. Thus protects these proteins from oxidative-stress damage caused by reactive species of oxygen and chlorine generated by the host defense mechanisms. MsrPQ is essential for the maintenance of envelope integrity under bleach stress, rescuing a wide series of structurally unrelated periplasmic proteins from methionine oxidation, including the primary periplasmic chaperone SurA and the lipoprotein Pal. MsrQ provides electrons for reduction to the reductase catalytic subunit MsrP, using the quinone pool of the respiratory chain. The chain is Protein-methionine-sulfoxide reductase heme-binding subunit MsrQ from Salmonella agona (strain SL483).